Reading from the N-terminus, the 554-residue chain is Urocanate hydratase (554 aa).

Residues 52-53 (GG), Gln130, 176-178 (GMG), Glu196, Arg201, 242-243 (NA), 263-267 (QTSAH), 273-274 (YL), and Tyr322 each bind NAD(+). The active site involves Cys410. Gly492 contacts NAD(+).

This sequence belongs to the urocanase family. Requires NAD(+) as cofactor.

It is found in the cytoplasm. The catalysed reaction is 4-imidazolone-5-propanoate = trans-urocanate + H2O. It functions in the pathway amino-acid degradation; L-histidine degradation into L-glutamate; N-formimidoyl-L-glutamate from L-histidine: step 2/3. Its function is as follows. Catalyzes the conversion of urocanate to 4-imidazolone-5-propionate. The polypeptide is Urocanate hydratase (Shewanella halifaxensis (strain HAW-EB4)).